We begin with the raw amino-acid sequence, 381 residues long: Lipid-A-disaccharide synthase (381 aa).

Belongs to the LpxB family.

The enzyme catalyses 2-N,3-O-bis[(3R)-3-hydroxytetradecanoyl]-alpha-D-glucosaminyl 1-phosphate + UDP-2-N,3-O-bis[(3R)-3-hydroxytetradecanoyl]-alpha-D-glucosamine = lipid A disaccharide (E. coli) + UDP + H(+). The catalysed reaction is a lipid X + a UDP-2-N,3-O-bis[(3R)-3-hydroxyacyl]-alpha-D-glucosamine = a lipid A disaccharide + UDP + H(+). It functions in the pathway glycolipid biosynthesis; lipid IV(A) biosynthesis; lipid IV(A) from (3R)-3-hydroxytetradecanoyl-[acyl-carrier-protein] and UDP-N-acetyl-alpha-D-glucosamine: step 5/6. Functionally, condensation of UDP-2,3-diacylglucosamine and 2,3-diacylglucosamine-1-phosphate to form lipid A disaccharide, a precursor of lipid A, a phosphorylated glycolipid that anchors the lipopolysaccharide to the outer membrane of the cell. This is Lipid-A-disaccharide synthase from Erwinia tasmaniensis (strain DSM 17950 / CFBP 7177 / CIP 109463 / NCPPB 4357 / Et1/99).